The sequence spans 304 residues: MLFEQIAANKRKTVFIILGFFIFVLMVGAAIGIIVWNNYLNGLILAAAIGAVYILIMVMSSSSVVMAMNHAKEVTSKEQAPVLWDTVESMAMVAGIPMPKVYIVEDPSPNAFATGISPEKGAVAVTRGLLNKLERYELEGVIAHEISHIRNYDIRLSTIAIALVAVIAILSDLAMRLIFWGSLTGGRNSRKSDNNNGGGAQIIIYVVALIFVILAPIIATAIQFALSRNREYLADASAVELTRNPDGLIQALQKISGDTKKMEEVSASSESIYFSSPLKSKKDKPGLFDSHPPISSRIERLENM.

A run of 2 helical transmembrane segments spans residues 14–34 (VFIILGFFIFVLMVGAAIGII) and 39–59 (YLNGLILAAAIGAVYILIMVM). H144 contributes to the Zn(2+) binding site. Residue E145 is part of the active site. Position 148 (H148) interacts with Zn(2+). A run of 2 helical transmembrane segments spans residues 159–179 (IAIALVAVIAILSDLAMRLIF) and 202–222 (IIIYVVALIFVILAPIIATAI). Zn(2+) is bound at residue E231. Residues 275–304 (SSPLKSKKDKPGLFDSHPPISSRIERLENM) form a disordered region.

Belongs to the peptidase M48B family. Zn(2+) is required as a cofactor.

The protein localises to the cell membrane. The protein is Protease HtpX homolog of Listeria innocua serovar 6a (strain ATCC BAA-680 / CLIP 11262).